The sequence spans 363 residues: MQQPMVEFKNVIKKYDDNQILKGIDMALEKGKFYTLLGPSGCGKTTILRIIAGFTNASSGDVLFEGKRMNDLPANKRQVNTVFQDYALFPHLNVFDNVAFGLNLRKVKKSDVEKKVIEALKLVRLGGYEHREISELSGGQQQRVAIARALANEPKVLLLDEPLSALDMKLRKAMQYELRDLQQRLGITFLFVTHDQEEALAMSDEIFVMNEGNVLQSGTPVDIYDEPINHFVADFIGESNILPGKMVADYQVEIVGKVFECADAGMKPNEAVEIVLRPEDLDIVAVNQGQLVVTVDTQLFRGDYYEITAYDDDRNRWLIHSTNPAKDGQQVGLFFEPEDVHVMRFGESEEDFDARLESYEEED.

The 231-residue stretch at 6–236 folds into the ABC transporter domain; the sequence is VEFKNVIKKY…PINHFVADFI (231 aa). Residue 38–45 participates in ATP binding; sequence GPSGCGKT.

This sequence belongs to the ABC transporter superfamily. Spermidine/putrescine importer (TC 3.A.1.11.1) family. In terms of assembly, the complex is composed of two ATP-binding proteins (PotA), two transmembrane proteins (PotB and PotC) and a solute-binding protein (PotD).

It localises to the cell membrane. The catalysed reaction is ATP + H2O + polyamine-[polyamine-binding protein]Side 1 = ADP + phosphate + polyamineSide 2 + [polyamine-binding protein]Side 1.. Functionally, part of the ABC transporter complex PotABCD involved in spermidine/putrescine import. Responsible for energy coupling to the transport system. The protein is Spermidine/putrescine import ATP-binding protein PotA of Latilactobacillus sakei subsp. sakei (strain 23K) (Lactobacillus sakei subsp. sakei).